A 251-amino-acid polypeptide reads, in one-letter code: Tachykinins (251 aa).

The signal sequence occupies residues 1 to 21 (MGAPRTCLIFITIQLVSLAYA). Residues 22 to 25 (QEVS) constitute a propeptide that is removed on maturation. Arginine amide is present on Arg36. The propeptide occupies 39-50 (KYFDEEGIEQFY). Lys61 carries the post-translational modification Lysine amide. The propeptide occupies 65–163 (SLQDILEAPE…MEPEQSNDLD (99 aa)). Arg176 is subject to Arginine amide. The propeptide occupies 180-183 (SINN). The residue at position 199 (Arg199) is an Arginine amide. Positions 203-223 (DLKNSNAHEIKFLVDQNGPLP) are excised as a propeptide. Position 235 is an arginine amide (Arg235). Positions 239-251 (WTDEPSLEMDMPN) are excised as a propeptide.

It belongs to the tachykinin family. Tachykinin-related peptide 1: Expressed in antennal lobe (AL) and gnathal ganglion (GNG) (at protein level). Expression in AL detected in all animals, in GNG in most animals (at protein level). Not expressed in corpora cardiaca (CC) and corpora allata (CA) (at protein level). Tachykinin-related peptide 2: Expressed in antennal lobe (AL) corpora cardiaca (CC) and corpora allata (CA) with expression detected in few animals (at protein level). Not expressed in gnathal ganglion (GNG) (at protein level). Tachykinin-related peptide 4: Expressed in corpora cardiaca (CC), corpora allata (CA), antennal lobe (AL) and gnathal ganglion (GNG) (at protein level). Expression in AL and GNG detected in most animals, in CC and CA detected in few animals (at protein level). Tachykinin-related peptide 5: Expressed in corpora cardiaca (CC), corpora allata (CA), antennal lobe (AL) and gnathal ganglion (GNG) (at protein level). Expression in CC and CA detected in some animals, in AL and GNG in few animals (at protein level). Tachykinin-related peptide 6: Expressed in antennal lobe (AL) and gnathal ganglion (GNG) (at protein level). Expression in AL detected in all animals, in GNG in some animals (at protein level). Not expressed in corpora cardiaca (CC) and corpora allata (CA) (at protein level).

Its subcellular location is the secreted. Its function is as follows. Tachykinins are active peptides which excite neurons, evoke behavioral responses, are potent vasodilators and secretagogues, and contract (directly or indirectly) many smooth muscles. This chain is Tachykinins, found in Agrotis ipsilon (Black cutworm moth).